We begin with the raw amino-acid sequence, 316 residues long: Aspartate carbamoyltransferase catalytic subunit (316 aa).

2 residues coordinate carbamoyl phosphate: R66 and T67. Position 94 (K94) interacts with L-aspartate. The carbamoyl phosphate site is built by R116, H146, and Q149. Residues R180 and R235 each contribute to the L-aspartate site. Carbamoyl phosphate contacts are provided by G276 and P277.

It belongs to the aspartate/ornithine carbamoyltransferase superfamily. ATCase family. Heterododecamer (2C3:3R2) of six catalytic PyrB chains organized as two trimers (C3), and six regulatory PyrI chains organized as three dimers (R2).

The enzyme catalyses carbamoyl phosphate + L-aspartate = N-carbamoyl-L-aspartate + phosphate + H(+). Its pathway is pyrimidine metabolism; UMP biosynthesis via de novo pathway; (S)-dihydroorotate from bicarbonate: step 2/3. Its function is as follows. Catalyzes the condensation of carbamoyl phosphate and aspartate to form carbamoyl aspartate and inorganic phosphate, the committed step in the de novo pyrimidine nucleotide biosynthesis pathway. This Stenotrophomonas maltophilia (strain K279a) protein is Aspartate carbamoyltransferase catalytic subunit.